A 310-amino-acid chain; its full sequence is Ribosomal RNA small subunit methyltransferase H (310 aa).

S-adenosyl-L-methionine-binding positions include 32–34, Asp-52, Phe-79, Asp-100, and Gln-107; that span reads GGH.

It belongs to the methyltransferase superfamily. RsmH family.

It localises to the cytoplasm. The enzyme catalyses cytidine(1402) in 16S rRNA + S-adenosyl-L-methionine = N(4)-methylcytidine(1402) in 16S rRNA + S-adenosyl-L-homocysteine + H(+). Its function is as follows. Specifically methylates the N4 position of cytidine in position 1402 (C1402) of 16S rRNA. The sequence is that of Ribosomal RNA small subunit methyltransferase H from Bacillus cytotoxicus (strain DSM 22905 / CIP 110041 / 391-98 / NVH 391-98).